The sequence spans 100 residues: Urease subunit gamma (100 aa).

The protein belongs to the urease gamma subunit family. As to quaternary structure, heterotrimer of UreA (gamma), UreB (beta) and UreC (alpha) subunits. Three heterotrimers associate to form the active enzyme.

The protein resides in the cytoplasm. The enzyme catalyses urea + 2 H2O + H(+) = hydrogencarbonate + 2 NH4(+). It functions in the pathway nitrogen metabolism; urea degradation; CO(2) and NH(3) from urea (urease route): step 1/1. This chain is Urease subunit gamma, found in Agrobacterium fabrum (strain C58 / ATCC 33970) (Agrobacterium tumefaciens (strain C58)).